Here is a 107-residue protein sequence, read N- to C-terminus: Nucleoid-associated protein BAbS19_I00290 (107 aa).

It belongs to the YbaB/EbfC family. Homodimer.

Its subcellular location is the cytoplasm. It is found in the nucleoid. In terms of biological role, binds to DNA and alters its conformation. May be involved in regulation of gene expression, nucleoid organization and DNA protection. The protein is Nucleoid-associated protein BAbS19_I00290 of Brucella abortus (strain S19).